The sequence spans 475 residues: 3-isopropylmalate dehydratase large subunit 1 (475 aa).

Residues C353, C413, and C416 each coordinate [4Fe-4S] cluster.

Belongs to the aconitase/IPM isomerase family. LeuC type 1 subfamily. Heterodimer of LeuC and LeuD. [4Fe-4S] cluster is required as a cofactor.

It catalyses the reaction (2R,3S)-3-isopropylmalate = (2S)-2-isopropylmalate. It functions in the pathway amino-acid biosynthesis; L-leucine biosynthesis; L-leucine from 3-methyl-2-oxobutanoate: step 2/4. Catalyzes the isomerization between 2-isopropylmalate and 3-isopropylmalate, via the formation of 2-isopropylmaleate. The chain is 3-isopropylmalate dehydratase large subunit 1 from Mannheimia succiniciproducens (strain KCTC 0769BP / MBEL55E).